The primary structure comprises 1653 residues: Cortactin-binding protein 2 (1653 aa).

5 disordered regions span residues 1–27 (MATDGASCEPDASRAPEEAAGATAEAA), 203–222 (KKKTNELEEELSAEKRRSTE), 268–297 (QLKRGSDSKPSLSLPRKTKDRRSVSISVGT), 314–339 (ESTEHVKKSPLTVPVKPSPGSAKGSV), and 356–609 (HGDL…PSID). A coiled-coil region spans residues 119–276 (RKMQERMSTQ…EQLKRGSDSK (158 aa)). Positions 379 to 389 (GPSTGSPPDLT) are enriched in polar residues. Low complexity predominate over residues 390–408 (SSAAQSPAAAPHGLPPAHG). Composition is skewed to polar residues over residues 444–470 (GNANDPDQNGNTTQSPPSRDVSPTSRD), 478–490 (ARNTVTQALSRFT), and 573–584 (TVASSPPSSLPQ). Residue arginine 488 is modified to Asymmetric dimethylarginine. 5 ANK repeats span residues 700–730 (GRPTLLQQAAAQGNVTLLSMLLNEEGLDINY), 734–763 (DGHSALYSAAKNGHTDCVRLLLNAEAQVNA), 767–796 (NGFTPLCAAAAQGHFECVELLIAYDAHINH), 800–829 (GGQTPLYLACKNGNKECIKLLLEAGTDRSV), and 833–862 (DGWTPVHAAVDTGNVDSLKLLMYHGAPAHG). Residues 860–892 (AHGNSLNEEEPESDASDLDEGEESSEGKSKPVV) are disordered. The span at 866 to 883 (NEEEPESDASDLDEGEES) shows a compositional bias: acidic residues. The ANK 6 repeat unit spans residues 903–933 (EGWTAAHIAASKGFKNCLEILCRHRGLEPER). Positions 1441–1472 (ESGAWRKVNTSPRRKSGRFSSPTWNKPDLSNE) are disordered. Serine 1514 bears the Phosphoserine mark. Residues 1545–1653 (DLRTFDSSGN…KNEHIEKLNK (109 aa)) form a disordered region. 2 stretches are compositionally biased toward polar residues: residues 1549–1564 (FDSSGNNPAFSATANN) and 1572–1589 (KEVSPLSSHQTTECSNNK). Positions 1614-1628 (SQNTKRSSSSSNTRQ) are enriched in low complexity. Basic and acidic residues predominate over residues 1635–1653 (SKEENWNLHKNEHIEKLNK).

As to quaternary structure, interacts with CTTN/cortactin SH3 domain. Interacts with STRN, STRN4/zinedin and MOB4/phocein; this interactions mediate the association with the STRIPAK core complex and may regulate dendritic spine distribution of the STRIPAK complex in hippocampal neurons. Activation of glutamate receptors weakens the interaction with STRN and STRN4.

It is found in the cytoplasm. Its subcellular location is the cell cortex. The protein resides in the cell projection. It localises to the dendritic spine. Its function is as follows. Regulates the dendritic spine distribution of CTTN/cortactin in hippocampal neurons, and thus controls dendritic spinogenesis and dendritic spine maintenance. Associates with the striatin-interacting phosphatase and kinase (STRIPAK) core complex to regulate dendritic spine distribution of the STRIPAK complex in hippocampal neurons. The polypeptide is Cortactin-binding protein 2 (CTTNBP2) (Eulemur macaco macaco (Black lemur)).